The primary structure comprises 196 residues: Ribosome-binding factor A (196 aa).

Belongs to the RbfA family. In terms of assembly, monomer. Binds 30S ribosomal subunits, but not 50S ribosomal subunits or 70S ribosomes.

It localises to the cytoplasm. Its function is as follows. One of several proteins that assist in the late maturation steps of the functional core of the 30S ribosomal subunit. Associates with free 30S ribosomal subunits (but not with 30S subunits that are part of 70S ribosomes or polysomes). Required for efficient processing of 16S rRNA. May interact with the 5'-terminal helix region of 16S rRNA. This chain is Ribosome-binding factor A, found in Tropheryma whipplei (strain TW08/27) (Whipple's bacillus).